The sequence spans 471 residues: Glutamate--tRNA ligase (471 aa).

The 'HIGH' region motif lies at proline 9–glycine 19. 4 residues coordinate Zn(2+): cysteine 98, cysteine 100, cysteine 125, and histidine 127. The short motif at lysine 237–arginine 241 is the 'KMSKS' region element. Lysine 240 provides a ligand contact to ATP.

The protein belongs to the class-I aminoacyl-tRNA synthetase family. Glutamate--tRNA ligase type 1 subfamily. As to quaternary structure, monomer. Requires Zn(2+) as cofactor.

It is found in the cytoplasm. The enzyme catalyses tRNA(Glu) + L-glutamate + ATP = L-glutamyl-tRNA(Glu) + AMP + diphosphate. Catalyzes the attachment of glutamate to tRNA(Glu) in a two-step reaction: glutamate is first activated by ATP to form Glu-AMP and then transferred to the acceptor end of tRNA(Glu). The sequence is that of Glutamate--tRNA ligase from Escherichia coli O1:K1 / APEC.